The primary structure comprises 330 residues: Global transcription regulator sge1 (330 aa).

Disordered regions lie at residues 93–123 (PPGE…RNSV) and 239–306 (QYAP…HQPQ). Residues 105-114 (GKSTTQSGGI) are compositionally biased toward polar residues. The span at 250-306 (QQPALQQQPQQQPQPQHQPQLQYQPQPHQHQPQLQYQPQQQHQPQQQYRPQPQHQPQ) shows a compositional bias: low complexity.

Belongs to the MIT1/WOR1 family.

The protein localises to the nucleus. Its function is as follows. Global transcriptional regulator of pathogenicity. Acts as an activator of parasitic growth. Not essential for colonization or penetration of the root surface, but required for expression of genes encoding effectors that are secreted during infection. Involved in conidiogenesis, but is not required for conidial fitness, overall (colony) morphology, vegetative growth or carbon source utilization. This is Global transcription regulator sge1 from Fusarium oxysporum f. sp. lycopersici (strain 4287 / CBS 123668 / FGSC 9935 / NRRL 34936) (Fusarium vascular wilt of tomato).